A 213-amino-acid polypeptide reads, in one-letter code: Anti-sigma-E factor ChrR (213 aa).

Residues 2–85 (TIRHHVSDAL…QIQRPAPARR (84 aa)) form a sufficient to bind sigma factor and inhibit its activity region. Positions 6, 31, 35, 38, 141, 143, 147, and 177 each coordinate Zn(2+). Residues 86–194 (ADPRAPAPLA…LDCICLAATD (109 aa)) are required for response to singlet oxygen.

The protein belongs to the zinc-associated anti-sigma factor (ZAS) superfamily. Forms a 1:1 complex with cognate ECF RNA polymerase sigma factor RpoE; this inhibits the interaction of RpoE with the RNA polymerase catalytic core. Zn(2+) serves as cofactor.

Anti-sigma factor that inhibits the activity of the extracytoplasmic function (ECF) sigma-E factor (RpoE), thereby indirectly regulating the transcription of the cycA and rpoE genes. ECF sigma factors are held in an inactive form by a cognate anti-sigma factor. The chain is Anti-sigma-E factor ChrR (chrR) from Cereibacter sphaeroides (strain ATCC 17023 / DSM 158 / JCM 6121 / CCUG 31486 / LMG 2827 / NBRC 12203 / NCIMB 8253 / ATH 2.4.1.) (Rhodobacter sphaeroides).